The sequence spans 322 residues: Chemokine XC receptor 1 (322 aa).

Over 1–27 (MESSTAFYDYHDKLSLLCENNVIFFST) the chain is Extracellular. The helical transmembrane segment at 28–55 (ISTIVLYSLVFLLSLVGNSLVLWVLVKY) threads the bilayer. The Cytoplasmic segment spans residues 56 to 65 (ENLESLTNIF). A helical membrane pass occupies residues 66–85 (ILNLCLSDLMFSCLLPVLIS). Residues 86–98 (AQWSWFLGDFFCK) lie on the Extracellular side of the membrane. An intrachain disulfide couples Cys-97 to Cys-170. The chain crosses the membrane as a helical span at residues 99–120 (FFNMIFGISLYSSIFFLTIMTI). At 121–137 (HRYLSVVSPISTLGIHT) the chain is on the cytoplasmic side. The chain crosses the membrane as a helical span at residues 138–162 (LRCRVLVTSCVWAASILFSIPDAVF). The Extracellular portion of the chain corresponds to 163-185 (HKVISLNCKYSEHHGFLASVYQH). The chain crosses the membrane as a helical span at residues 186–204 (NIFFLLSMGIILFCYVQIL). The Cytoplasmic portion of the chain corresponds to 205 to 220 (RTLFRTRSRQRHRTVR). Residues 221 to 243 (LIFTVVVAYFLSWAPYNLTLFLK) traverse the membrane as a helical segment. Residues 244–259 (TGIIQQSCESLQQLDI) are Extracellular-facing. A helical transmembrane segment spans residues 260-283 (AMIICRHLAFSHCCFNPVLYVFVG). The Cytoplasmic portion of the chain corresponds to 284-322 (IKFRRHLKHLFQQVWLCRKTSSTVPCSPGTFTYEGPSFY).

It belongs to the G-protein coupled receptor 1 family. As to expression, expressed by dendritic cells from the thymus, slpeen, subcutaneous lymph nodes and mesenteric lymph nodes.

It is found in the cell membrane. Its function is as follows. Receptor for chemokines SCYC1 and SCYC2. Subsequently transduces a signal by increasing the intracellular calcium ions level. Receptor for XCL1/Lymphotactin. The polypeptide is Chemokine XC receptor 1 (Xcr1) (Mus musculus (Mouse)).